We begin with the raw amino-acid sequence, 237 residues long: MIVFILLSLAAVLRQSFGNVDFNSESPRNPGKQQEIVNIHNSFRRSVRPTARNMLKMEWYSEAASNAERWAYQCAYDHSPRSSRILNGIQCGENIFMASDPWAWTSIIQDWYDEYRNFVYGVGANPPDSVTGHYTQIVWYKSYLVGCAAAYCPSSLYNYFYVCQYCPAGNIQGSTSTPYASGPTCADCPSNCDNGLCTNPCTHKDDYNNCNSLVSDCQSDWDKSHCPATCFCKNKII.

Positions 1 to 18 (MIVFILLSLAAVLRQSFG) are cleaved as a signal peptide. In terms of domain architecture, SCP spans 37 to 165 (VNIHNSFRRS…LYNYFYVCQY (129 aa)). 8 disulfide bridges follow: Cys74/Cys152, Cys91/Cys166, Cys147/Cys163, Cys185/Cys192, Cys188/Cys197, Cys201/Cys232, Cys210/Cys226, and Cys217/Cys230. Positions 201-232 (CTHKDDYNNCNSLVSDCQSDWDKSHCPATCFC) constitute a ShKT domain.

It belongs to the CRISP family. Expressed by the venom gland.

The protein localises to the secreted. Its function is as follows. This protein does not inhibit smooth muscle contraction elicited by high potassium levels or caffeine. This chain is Cysteine-rich venom protein tigrin, found in Rhabdophis tigrinus tigrinus (Tiger keelback snake).